A 104-amino-acid chain; its full sequence is Small ribosomal subunit protein uS10 (104 aa).

This sequence belongs to the universal ribosomal protein uS10 family. Part of the 30S ribosomal subunit.

Functionally, involved in the binding of tRNA to the ribosomes. In Thermoplasma acidophilum (strain ATCC 25905 / DSM 1728 / JCM 9062 / NBRC 15155 / AMRC-C165), this protein is Small ribosomal subunit protein uS10.